Reading from the N-terminus, the 792-residue chain is Phenylalanine--tRNA ligase beta subunit (792 aa).

The tRNA-binding domain maps to 39–147; sequence GEALDLIVVA…DDAPIGTPLA (109 aa). Residues 400 to 475 enclose the B5 domain; sequence PAPASILLRR…RIRGYEHLPT (76 aa). 4 residues coordinate Mg(2+): aspartate 453, aspartate 459, glutamate 462, and glutamate 463. The FDX-ACB domain occupies 698-791; that stretch reads SRFPFVRRDL…IQQRHDVRIR (94 aa).

It belongs to the phenylalanyl-tRNA synthetase beta subunit family. Type 1 subfamily. As to quaternary structure, tetramer of two alpha and two beta subunits. Requires Mg(2+) as cofactor.

Its subcellular location is the cytoplasm. It carries out the reaction tRNA(Phe) + L-phenylalanine + ATP = L-phenylalanyl-tRNA(Phe) + AMP + diphosphate + H(+). The protein is Phenylalanine--tRNA ligase beta subunit (pheT) of Xylella fastidiosa (strain 9a5c).